We begin with the raw amino-acid sequence, 265 residues long: tRNA pseudouridine synthase A (265 aa).

The active-site Nucleophile is aspartate 55. Tyrosine 113 provides a ligand contact to substrate.

It belongs to the tRNA pseudouridine synthase TruA family. In terms of assembly, homodimer.

It catalyses the reaction uridine(38/39/40) in tRNA = pseudouridine(38/39/40) in tRNA. Formation of pseudouridine at positions 38, 39 and 40 in the anticodon stem and loop of transfer RNAs. The sequence is that of tRNA pseudouridine synthase A from Levilactobacillus brevis (strain ATCC 367 / BCRC 12310 / CIP 105137 / JCM 1170 / LMG 11437 / NCIMB 947 / NCTC 947) (Lactobacillus brevis).